The following is a 192-amino-acid chain: Imidazole glycerol phosphate synthase subunit HisH (192 aa).

Residues 1–192 (MIVIVDYGLG…QAIQGGFIND (192 aa)) enclose the Glutamine amidotransferase type-1 domain. Cys77 (nucleophile) is an active-site residue. Active-site residues include His169 and Glu171.

Heterodimer of HisH and HisF.

The protein localises to the cytoplasm. It carries out the reaction 5-[(5-phospho-1-deoxy-D-ribulos-1-ylimino)methylamino]-1-(5-phospho-beta-D-ribosyl)imidazole-4-carboxamide + L-glutamine = D-erythro-1-(imidazol-4-yl)glycerol 3-phosphate + 5-amino-1-(5-phospho-beta-D-ribosyl)imidazole-4-carboxamide + L-glutamate + H(+). The enzyme catalyses L-glutamine + H2O = L-glutamate + NH4(+). The protein operates within amino-acid biosynthesis; L-histidine biosynthesis; L-histidine from 5-phospho-alpha-D-ribose 1-diphosphate: step 5/9. Functionally, IGPS catalyzes the conversion of PRFAR and glutamine to IGP, AICAR and glutamate. The HisH subunit catalyzes the hydrolysis of glutamine to glutamate and ammonia as part of the synthesis of IGP and AICAR. The resulting ammonia molecule is channeled to the active site of HisF. The chain is Imidazole glycerol phosphate synthase subunit HisH from Staphylococcus aureus (strain COL).